The sequence spans 380 residues: Reducing-end xylose-releasing exo-oligoxylanase Rex8A (380 aa).

Glutamate 70 acts as the Proton donor in catalysis. Catalysis depends on aspartate 265, which acts as the Proton acceptor.

The protein belongs to the glycosyl hydrolase 8 (cellulase D) family.

The catalysed reaction is Hydrolysis of (1-&gt;4)-beta-D-xylose residues from the reducing end of oligosaccharides.. It functions in the pathway glycan degradation; xylan degradation. Its function is as follows. Involved in depolymerization of xylan, a major component of the lignocellulosic substrates. Acts as an exo-oligoxylanase that efficiently hydrolyzes xylooligosaccharides, releasing xylose from their reducing ends. Hydrolyzes xylooligomers of 3 to 6 xylose units to xylose and xylobiose. Besides linear xylooligosaccharides, also hydrolyzes branched xylooligomers, such as xylooligomers decorated with 4-O-methyl-D-glucuronic acid moieties. Its proposed role is the degradation of xylooligomers produced by the activity of extracellular xylanases once they have been transported inside cells. Shows minor activity on polymeric xylan (glucuronoxylan from beechwood). Is not active on cellooligosaccharides or cellulosic substrates, or on other polysaccharides such as pectin, polygalacturonic acid, laminarin, or lichenan. The polypeptide is Reducing-end xylose-releasing exo-oligoxylanase Rex8A (Paenibacillus barcinonensis).